A 287-amino-acid polypeptide reads, in one-letter code: Small ribosomal subunit biogenesis GTPase RsgA (287 aa).

The region spanning 63 to 223 (KNLLIRPKVA…VIDTPGFGSL (161 aa)) is the CP-type G domain. GTP is bound by residues 113 to 116 (SKMD) and 166 to 174 (GQSGVGKST). 4 residues coordinate Zn(2+): C246, C251, H253, and C259.

It belongs to the TRAFAC class YlqF/YawG GTPase family. RsgA subfamily. As to quaternary structure, monomer. Associates with 30S ribosomal subunit, binds 16S rRNA. Requires Zn(2+) as cofactor.

It is found in the cytoplasm. Its function is as follows. One of several proteins that assist in the late maturation steps of the functional core of the 30S ribosomal subunit. Helps release RbfA from mature subunits. May play a role in the assembly of ribosomal proteins into the subunit. Circularly permuted GTPase that catalyzes slow GTP hydrolysis, GTPase activity is stimulated by the 30S ribosomal subunit. This is Small ribosomal subunit biogenesis GTPase RsgA from Malacoplasma penetrans (strain HF-2) (Mycoplasma penetrans).